The sequence spans 333 residues: Probable tRNA pseudouridine synthase B (333 aa).

Positions 1–14 (MKCPSREVFSKFEE) are enriched in basic and acidic residues. Positions 1–27 (MKCPSREVFSKFEESTNPQWGKPPSQR) are disordered. The active-site Nucleophile is the Asp71. A PUA domain is found at 238 to 313 (LPKIWVRDSA…LVARTDRVVM (76 aa)).

This sequence belongs to the pseudouridine synthase TruB family. Type 2 subfamily.

It catalyses the reaction uridine(55) in tRNA = pseudouridine(55) in tRNA. Its function is as follows. Could be responsible for synthesis of pseudouridine from uracil-55 in the psi GC loop of transfer RNAs. The chain is Probable tRNA pseudouridine synthase B from Pyrobaculum aerophilum (strain ATCC 51768 / DSM 7523 / JCM 9630 / CIP 104966 / NBRC 100827 / IM2).